The sequence spans 127 residues: Lysozyme C (127 aa).

Residues 1–127 form the C-type lysozyme domain; that stretch reads KDIPRCELVK…KDLSSYVRGC (127 aa). Intrachain disulfides connect cysteine 6–cysteine 127, cysteine 30–cysteine 115, cysteine 64–cysteine 80, and cysteine 76–cysteine 94. Active-site residues include glutamate 35 and aspartate 52. Residues lysine 82, aspartate 85, asparagine 87, aspartate 90, and aspartate 91 each coordinate Ca(2+).

Belongs to the glycosyl hydrolase 22 family. As to quaternary structure, monomer. Ca(2+) serves as cofactor.

It is found in the secreted. It carries out the reaction Hydrolysis of (1-&gt;4)-beta-linkages between N-acetylmuramic acid and N-acetyl-D-glucosamine residues in a peptidoglycan and between N-acetyl-D-glucosamine residues in chitodextrins.. In terms of biological role, lysozymes have primarily a bacteriolytic function; those in tissues and body fluids are associated with the monocyte-macrophage system and enhance the activity of immunoagents. This Columba livia (Rock dove) protein is Lysozyme C (LYZ).